The following is a 279-amino-acid chain: Phenylalanine 3-hydroxylase (279 aa).

Fe cation-binding residues include His140, His145, and Glu186.

Belongs to the biopterin-dependent aromatic amino acid hydroxylase family. Requires Fe(2+) as cofactor.

The enzyme catalyses (6R)-L-erythro-5,6,7,8-tetrahydrobiopterin + L-phenylalanine + O2 = 3-hydroxy-L-phenylalanine + (4aS,6R)-4a-hydroxy-L-erythro-5,6,7,8-tetrahydrobiopterin. Its function is as follows. In vitro, catalyzes the highly regiospecific C-3 hydroxylation of L-phenylalanine (L-Phe) to yield 3-hydroxy-L-phenylalanine (meta-Tyr), an amino acid found in bacterial secondary metabolites such as sanglifehrin A and some pacidamycins. Tetrahydrobiopterin (BH4) seems to be the physiological pterin, however the hydroxylase is also able to use 6-methyltetrahydropterin (6-MePH4). The chain is Phenylalanine 3-hydroxylase from Streptomyces coeruleorubidus.